A 129-amino-acid polypeptide reads, in one-letter code: Prefoldin subunit 6 (129 aa).

2 coiled-coil regions span residues 6 to 26 and 84 to 118; these read VRDLQRDLENKANDLGKIQKD and IEYISAELKRLDAILQDMEEKQNNKRETIMKLQQR.

The protein belongs to the prefoldin subunit beta family. Heterohexamer of two PFD-alpha type and four PFD-beta type subunits forming prefoldin co-chaperone complex. Interacts with PFD2, PFD3, PFD4 and PFD5. Interacts with LSM8, a specific subunit of the LSM2-8 complex, which is a core component of the spliceosome. Binds to HSP90 to facilitate the formation of a larger complex made at least of HSP90, PFD6 and LSM8.

The protein localises to the cytoplasm. Its subcellular location is the nucleus. In terms of biological role, binds specifically to cytosolic chaperonin (c-CPN) and transfers target proteins to it. Binds to nascent polypeptide chain and promotes folding in an environment in which there are many competing pathways for nonnative proteins. Together with other chaperonins, contribute to the regulation of gene expression by modulating the spliceosome function on pre-mRNA splicing post-transcriptionally by acting as a co-chaperone of Hsp90 to control levels of LSM8. Required for the biogenesis of tubulins and for subsequent microtubules (MTs) organization and dynamicity, but unable to associate with microtubules. Involved in the process leading to microtubules dissociation in response to gibberellic acid (GA) probably due to the DELLA proteins-mediated translocation of the prefoldin co-chaperone complex from the cytoplasm to the nucleus. Contributes to the GA-dependent regulation of PIN2 trafficking at the plasma membrane, thus influencing auxin flux. The sequence is that of Prefoldin subunit 6 from Arabidopsis thaliana (Mouse-ear cress).